The following is a 224-amino-acid chain: UPF0758 protein PST_0473 (224 aa).

The 123-residue stretch at 102–224 folds into the MPN domain; sequence ALESPQAVRD…PLSMAEYGWM (123 aa). 3 residues coordinate Zn(2+): His173, His175, and Asp186. The JAMM motif motif lies at 173 to 186; the sequence is HNHPSGVAEPSQAD.

Belongs to the UPF0758 family.

This chain is UPF0758 protein PST_0473, found in Stutzerimonas stutzeri (strain A1501) (Pseudomonas stutzeri).